The following is a 444-amino-acid chain: Nuclear envelope integral membrane protein 1 (444 aa).

The N-terminal stretch at 1 to 43 (MAGGMKVAVSPAVGPGPWGSGVGGGGTVRLLLILSGCLVYGTA) is a signal peptide. Asn-125 carries an N-linked (GlcNAc...) asparagine glycan. 5 helical membrane passes run 161-181 (PKLF…DLLS), 186-206 (FYYS…IIFI), 216-236 (PIYV…QLVF), 245-265 (CYWQ…FAVC), and 289-309 (LCFM…IIIA). The a; required for its colocalization with lamins at the nuclear envelope stretch occupies residues 186-297 (FYYSTGMSVG…GLCFMYSGIQ (112 aa)). Positions 336–405 (PVPPRLLTEE…LTPNEVSVHE (70 aa)) are b; required for interaction with RAN-GTP. The segment at 336 to 444 (PVPPRLLTEE…PAITQNNFLT (109 aa)) is required for nuclear localization. Residues Ser-368, Ser-424, and Ser-425 each carry the phosphoserine modification.

This sequence belongs to the NEMP family. As to quaternary structure, homooligomer. Interacts with RAN-GTP. Interacts with EMD. In terms of processing, phosphorylation may regulate its interaction with RAN-GTP.

The protein localises to the nucleus inner membrane. It localises to the nucleus envelope. Functionally, together with EMD, contributes to nuclear envelope stiffness in germ cells. Required for female fertility. Essential for normal erythropoiesis. Required for efficient nuclear envelope opening and enucleation during the late stages of erythroblast maturation. The polypeptide is Nuclear envelope integral membrane protein 1 (NEMP1) (Pongo abelii (Sumatran orangutan)).